A 1822-amino-acid polypeptide reads, in one-letter code: Signal-induced proliferation-associated 1-like protein 1 (1822 aa).

Disordered stretches follow at residues 1–30 (MTSL…PKVH) and 47–125 (GSSV…VSLN). The span at 84–94 (PPRKENVKESS) shows a compositional bias: basic and acidic residues. Residues 95–125 (RSSQEIETSSCLESLSSKGSPVSQGSSVSLN) are compositionally biased toward low complexity. Phosphoserine is present on residues S162, S187, S193, S208, S255, and S288. The disordered stretch occupies residues 277–297 (EREKPLKRRSKSETGDSSIFR). Positions 638 to 855 (FMKLDEQGLN…RTRQEYLKDL (218 aa)) constitute a Rap-GAP domain. Residues 992–1068 (EMTLRRNGLG…VKVVIIPPHD (77 aa)) form the PDZ domain. Phosphoserine is present on residues S1117, S1126, S1155, S1166, S1188, S1209, and S1220. The tract at residues 1134 to 1165 (AGKGDGKMPLPERAANIPRSISSDGRPLERRL) is disordered. The tract at residues 1183 to 1252 (SQCRNSPSNL…WQRSEDSLAD (70 aa)) is disordered. A compositionally biased stretch (low complexity) spans 1188 to 1198 (SPSNLSSSSET). Residues 1225–1244 (DRQNTQSDIGGSGKSTPSWQ) show a composition bias toward polar residues. Phosphoserine occurs at positions 1273 and 1288. Residues 1286–1324 (HLSPNKQGHSDSHYSSHSSSNTLSSNASSAHSDEKWYDG) form a disordered region. Positions 1300–1315 (SSHSSSNTLSSNASSA) are enriched in low complexity. Phosphoserine; by PLK2 is present on S1344. T1348 bears the Phosphothreonine; by PLK2 mark. Residues 1358-1367 (TASLGASTSS) are compositionally biased toward low complexity. Positions 1358-1382 (TASLGASTSSPRSGPGKEKVAPLWH) are disordered. The residue at position 1367 (S1367) is a Phosphoserine; by CDK5. S1384 is modified (phosphoserine). The segment covering 1395 to 1407 (LETEGHGMDRKTE) has biased composition (basic and acidic residues). Residues 1395-1493 (LETEGHGMDR…SSSGPRTFYP (99 aa)) are disordered. 5 positions are modified to phosphoserine: S1408, S1409, S1430, S1449, and S1451. Residues 1417-1436 (KSQGGSSPLTRENSTFSIND) are compositionally biased toward polar residues. 2 stretches are compositionally biased toward low complexity: residues 1437–1451 (ATSH…HSAS) and 1471–1486 (SSQL…SSSS). S1546 and S1567 each carry phosphoserine. Residues 1567 to 1595 (SPTPESQKNFKFHGLSSPQSPFPSTPTSR) are disordered. Phosphothreonine is present on T1569. Phosphoserine is present on residues S1572, S1583, S1586, S1603, and S1606. R1619 carries the asymmetric dimethylarginine modification. Residues S1621, S1665, S1668, S1726, S1729, S1746, S1747, and S1752 each carry the phosphoserine modification. The stretch at 1753 to 1813 (PTLASKVDQL…ASDKLKKFTE (61 aa)) forms a coiled coil.

Interacts (via PDZ domain) with EPHA4 (via PDZ motif); controls neuronal morphology through regulation of the RAP1 (RAP1A or RAP1B) and RAP2 (RAP2A, RAP2B or RAP2C) GTPases. Interacts with DLG4, PDLIM5, PDLIM7 and LZTS3. Interacts with the actin cytoskeleton. Post-translationally, ubiquitinated and degraded by the SCF(BTRC) following phosphorylation by PLK2. In terms of processing, phosphorylated at Ser-1367 by CDK5, creating a docking site for the POLO box domains of PLK2. Subsequently, PLK2 binds and phosphorylates SIPA1L1, leading to ubiquitination and degradation by the proteasome. Detected in brain (at protein level).

The protein resides in the cytoplasm. It is found in the cytoskeleton. It localises to the postsynaptic density. The protein localises to the synapse. Its subcellular location is the synaptosome. Stimulates the GTPase activity of RAP2A. Promotes reorganization of the actin cytoskeleton and recruits DLG4 to F-actin. Contributes to the regulation of dendritic spine morphogenesis. The sequence is that of Signal-induced proliferation-associated 1-like protein 1 (Sipa1l1) from Rattus norvegicus (Rat).